Consider the following 255-residue polypeptide: Ribonuclease HII (255 aa).

The RNase H type-2 domain occupies 70–255; it reads DLVAGIDEVG…FEPVPEFLIK (186 aa). Residues aspartate 76, glutamate 77, and aspartate 168 each coordinate a divalent metal cation.

It belongs to the RNase HII family. Mn(2+) serves as cofactor. Requires Mg(2+) as cofactor.

The protein localises to the cytoplasm. It catalyses the reaction Endonucleolytic cleavage to 5'-phosphomonoester.. Endonuclease that specifically degrades the RNA of RNA-DNA hybrids. The chain is Ribonuclease HII from Pediococcus pentosaceus (strain ATCC 25745 / CCUG 21536 / LMG 10740 / 183-1w).